The following is a 568-amino-acid chain: Potassium-transporting ATPase potassium-binding subunit (568 aa).

The next 10 helical transmembrane spans lie at 3–23 (TEIL…YPLG), 64–84 (FLKA…VLLV), 133–153 (FVIM…MAGV), 179–199 (ILLP…TPMG), 255–275 (MVEC…LGFY), 281–301 (LGYS…FINV), 375–395 (FGGV…AVFI), 418–438 (IATF…AISS), 497–517 (IVLI…AGLL), and 535–555 (VTFA…SFFP).

This sequence belongs to the KdpA family. As to quaternary structure, the system is composed of three essential subunits: KdpA, KdpB and KdpC.

It is found in the cell inner membrane. In terms of biological role, part of the high-affinity ATP-driven potassium transport (or Kdp) system, which catalyzes the hydrolysis of ATP coupled with the electrogenic transport of potassium into the cytoplasm. This subunit binds the periplasmic potassium ions and delivers the ions to the membrane domain of KdpB through an intramembrane tunnel. The sequence is that of Potassium-transporting ATPase potassium-binding subunit from Bacteroides fragilis (strain ATCC 25285 / DSM 2151 / CCUG 4856 / JCM 11019 / LMG 10263 / NCTC 9343 / Onslow / VPI 2553 / EN-2).